Reading from the N-terminus, the 851-residue chain is Envelope glycoprotein gp160 (851 aa).

A signal peptide spans 1 to 31 (MRAREIQRNWQHLGKRGILFLGILIICSAAN). Residues 32–679 (NLWVTVYYGV…ISNWLWYIKI (648 aa)) lie on the Extracellular side of the membrane. A disulfide bond links C53 and C73. N-linked (GlcNAc...) asparagine; by host glycosylation is found at N87, N132, N136, N143, N148, N159, N163, N193, N205, N238, N242, N249, N270, N303, N309, N339, N346, and N361. 5 cysteine pairs are disulfide-bonded: C118/C213, C125/C204, C130/C160, C226/C255, and C236/C247. Residues 130 to 159 (CTNVTNNRTNANKNDTNINATVTSTDEIKN) are V1. The segment at 160 to 204 (CSFNITTELKDKKKRVSALFYKLDIVQIKQSEINQSESEDRLINC) is V2. A V3 region spans residues 304 to 337 (CTRPSNNTRKSIHIGPGRAFYATGDIIGDIRQAH). Residues C304 and C338 are joined by a disulfide bond. Residues 369 to 379 (SSGGDPQVTRH) form a CD4-binding loop region. Intrachain disulfides connect C383–C438 and C390–C411. The segment at 390–411 (CDTTDTVDDTEEEEDTTITIPC) is V4. N-linked (GlcNAc...) asparagine; by host glycosylation is found at N435, N441, and N455. The tract at residues 449-469 (RDGGNDNNTRTEETFRPGGGD) is disordered. V5 stretches follow at residues 454-466 (DNNT…FRPG) and 456-466 (NTRTEETFRPG). Basic and acidic residues predominate over residues 457–469 (TRTEETFRPGGGD). Residues 507 to 527 (AVGIGALFLGFLGAAGSTMGA) form a fusion peptide region. The interval 569-587 (KQLRARVLAVERYLRDQQL) is immunosuppression. C593 and C599 are joined by a disulfide. Residues N606, N611, N620, and N632 are each glycosylated (N-linked (GlcNAc...) asparagine; by host). Positions 628 to 662 (KEISNHTSTIYRLIEESQIQQEKNEQDLLALDKWA) form a coiled coil. An MPER; binding to GalCer region spans residues 657-678 (ALDKWASLWNWFDISNWLWYIK). A helical membrane pass occupies residues 680 to 700 (FIMIVGGLIGLRIVFTVLSVV). The Cytoplasmic portion of the chain corresponds to 701–851 (NRVRQGYSPL…IRQGFERLLL (151 aa)). A YXXL motif; contains endocytosis signal motif is present at residues 707-710 (YSPL). The disordered stretch occupies residues 713–737 (QTLTPSPRGPDRPEGIEEGGGEQDK). Residue C759 is the site of S-palmitoyl cysteine; by host attachment. The short motif at 850-851 (LL) is the Di-leucine internalization motif element.

This sequence belongs to the HIV-1 env protein family. The mature envelope protein (Env) consists of a homotrimer of non-covalently associated gp120-gp41 heterodimers. The resulting complex protrudes from the virus surface as a spike. There seems to be as few as 10 spikes on the average virion. Interacts with host CD4, CCR5 and CXCR4. Gp120 also interacts with the C-type lectins CD209/DC-SIGN and CLEC4M/DC-SIGNR (collectively referred to as DC-SIGN(R)). Gp120 and gp41 interact with GalCer. Gp120 interacts with host ITGA4/ITGB7 complex; on CD4+ T-cells, this interaction results in rapid activation of integrin ITGAL/LFA-1, which facilitates efficient cell-to-cell spreading of HIV-1. Gp120 interacts with cell-associated heparan sulfate; this interaction increases virus infectivity on permissive cells and may be involved in infection of CD4- cells. In terms of assembly, the mature envelope protein (Env) consists of a homotrimer of non-covalently associated gp120-gp41 heterodimers. The resulting complex protrudes from the virus surface as a spike. There seems to be as few as 10 spikes on the average virion. In terms of processing, highly glycosylated by host. The high number of glycan on the protein is reffered to as 'glycan shield' because it contributes to hide protein sequence from adaptive immune system. Palmitoylation of the transmembrane protein and of Env polyprotein (prior to its proteolytic cleavage) is essential for their association with host cell membrane lipid rafts. Palmitoylation is therefore required for envelope trafficking to classical lipid rafts, but not for viral replication. Post-translationally, specific enzymatic cleavages in vivo yield mature proteins. Envelope glycoproteins are synthesized as an inactive precursor that is heavily N-glycosylated and processed likely by host cell furin in the Golgi to yield the mature SU and TM proteins. The cleavage site between SU and TM requires the minimal sequence [KR]-X-[KR]-R. About 2 of the 9 disulfide bonds of gp41 are reduced by P4HB/PDI, following binding to CD4 receptor.

Its subcellular location is the virion membrane. The protein localises to the host cell membrane. The protein resides in the host endosome membrane. Functionally, oligomerizes in the host endoplasmic reticulum into predominantly trimers. In a second time, gp160 transits in the host Golgi, where glycosylation is completed. The precursor is then proteolytically cleaved in the trans-Golgi and thereby activated by cellular furin or furin-like proteases to produce gp120 and gp41. Its function is as follows. Attaches the virus to the host lymphoid cell by binding to the primary receptor CD4. This interaction induces a structural rearrangement creating a high affinity binding site for a chemokine coreceptor like CXCR4 and/or CCR5. Acts as a ligand for CD209/DC-SIGN and CLEC4M/DC-SIGNR, which are respectively found on dendritic cells (DCs), and on endothelial cells of liver sinusoids and lymph node sinuses. These interactions allow capture of viral particles at mucosal surfaces by these cells and subsequent transmission to permissive cells. HIV subverts the migration properties of dendritic cells to gain access to CD4+ T-cells in lymph nodes. Virus transmission to permissive T-cells occurs either in trans (without DCs infection, through viral capture and transmission), or in cis (following DCs productive infection, through the usual CD4-gp120 interaction), thereby inducing a robust infection. In trans infection, bound virions remain infectious over days and it is proposed that they are not degraded, but protected in non-lysosomal acidic organelles within the DCs close to the cell membrane thus contributing to the viral infectious potential during DCs' migration from the periphery to the lymphoid tissues. On arrival at lymphoid tissues, intact virions recycle back to DCs' cell surface allowing virus transmission to CD4+ T-cells. Acts as a class I viral fusion protein. Under the current model, the protein has at least 3 conformational states: pre-fusion native state, pre-hairpin intermediate state, and post-fusion hairpin state. During fusion of viral and target intracellular membranes, the coiled coil regions (heptad repeats) assume a trimer-of-hairpins structure, positioning the fusion peptide in close proximity to the C-terminal region of the ectodomain. The formation of this structure appears to drive apposition and subsequent fusion of viral and target cell membranes. Complete fusion occurs in host cell endosomes and is dynamin-dependent, however some lipid transfer might occur at the plasma membrane. The virus undergoes clathrin-dependent internalization long before endosomal fusion, thus minimizing the surface exposure of conserved viral epitopes during fusion and reducing the efficacy of inhibitors targeting these epitopes. Membranes fusion leads to delivery of the nucleocapsid into the cytoplasm. This is Envelope glycoprotein gp160 from Homo sapiens (Human).